The following is a 128-amino-acid chain: Large ribosomal subunit protein bL12 (128 aa).

It belongs to the bacterial ribosomal protein bL12 family. As to quaternary structure, homodimer. Part of the ribosomal stalk of the 50S ribosomal subunit. Forms a multimeric L10(L12)X complex, where L10 forms an elongated spine to which 2 to 4 L12 dimers bind in a sequential fashion. Binds GTP-bound translation factors.

In terms of biological role, forms part of the ribosomal stalk which helps the ribosome interact with GTP-bound translation factors. Is thus essential for accurate translation. In Corynebacterium aurimucosum (strain ATCC 700975 / DSM 44827 / CIP 107346 / CN-1) (Corynebacterium nigricans), this protein is Large ribosomal subunit protein bL12.